We begin with the raw amino-acid sequence, 81 residues long: Photosystem I iron-sulfur center (81 aa).

4Fe-4S ferredoxin-type domains are found at residues 2-31 (SHTV…MAPW) and 39-68 (VASA…VRVY). The [4Fe-4S] cluster site is built by C11, C14, C17, C21, C48, C51, C54, and C58.

The eukaryotic PSI reaction center is composed of at least 11 subunits. [4Fe-4S] cluster serves as cofactor.

It is found in the plastid. It localises to the chloroplast thylakoid membrane. It catalyses the reaction reduced [plastocyanin] + hnu + oxidized [2Fe-2S]-[ferredoxin] = oxidized [plastocyanin] + reduced [2Fe-2S]-[ferredoxin]. Its function is as follows. Apoprotein for the two 4Fe-4S centers FA and FB of photosystem I (PSI); essential for photochemical activity. FB is the terminal electron acceptor of PSI, donating electrons to ferredoxin. The C-terminus interacts with PsaA/B/D and helps assemble the protein into the PSI complex. Required for binding of PsaD and PsaE to PSI. PSI is a plastocyanin/cytochrome c6-ferredoxin oxidoreductase, converting photonic excitation into a charge separation, which transfers an electron from the donor P700 chlorophyll pair to the spectroscopically characterized acceptors A0, A1, FX, FA and FB in turn. The chain is Photosystem I iron-sulfur center from Tupiella akineta (Green alga).